Here is a 185-residue protein sequence, read N- to C-terminus: Large ribosomal subunit protein uL5 (185 aa).

This sequence belongs to the universal ribosomal protein uL5 family. In terms of assembly, part of the 50S ribosomal subunit; part of the 5S rRNA/L5/L18/L25 subcomplex. Contacts the 5S rRNA and the P site tRNA. Forms a bridge to the 30S subunit in the 70S ribosome.

In terms of biological role, this is one of the proteins that bind and probably mediate the attachment of the 5S RNA into the large ribosomal subunit, where it forms part of the central protuberance. In the 70S ribosome it contacts protein S13 of the 30S subunit (bridge B1b), connecting the 2 subunits; this bridge is implicated in subunit movement. Contacts the P site tRNA; the 5S rRNA and some of its associated proteins might help stabilize positioning of ribosome-bound tRNAs. This Parvibaculum lavamentivorans (strain DS-1 / DSM 13023 / NCIMB 13966) protein is Large ribosomal subunit protein uL5.